The chain runs to 46 residues: Iota-conotoxin-like M11.1 (46 aa).

4 disulfides stabilise this stretch: Cys5–Cys19, Cys12–Cys22, Cys18–Cys27, and Cys21–Cys38. Met44 bears the D-methionine mark. Residue Arg46 is a propeptide, removed by a carboxypeptidase.

This sequence belongs to the conotoxin I1 superfamily. In terms of tissue distribution, expressed by the venom duct.

Its subcellular location is the secreted. Functionally, iota-conotoxins bind to voltage-gated sodium channels (Nav) and act as agonists by shifting the voltage-dependence of activation to more hyperpolarized levels. Produces general excitatory symptoms. The sequence is that of Iota-conotoxin-like M11.1 from Conus magus (Magical cone).